We begin with the raw amino-acid sequence, 307 residues long: Synaptophysin (307 aa).

The Cytoplasmic segment spans residues 1–19 (MDVVNQLVAGGQFRVVKEP). Positions 15 to 222 (VVKEPLGFVK…NLWFVFKETG (208 aa)) constitute an MARVEL domain. The chain crosses the membrane as a helical span at residues 20–43 (LGFVKVLQWVFAIFAFATCGSYTG). The Vesicular portion of the chain corresponds to 44–101 (ELRLSVECANKTESALNIEVEFEYPFRLHQVYFDAPSCVKGGTTKIFLVGDYSSSAEF). Residue Asn53 is glycosylated (N-linked (GlcNAc...) asparagine). Tyr75 carries the phosphotyrosine modification. The helical transmembrane segment at 102 to 125 (FVTVAVFAFLYSMGALATYIFLQN) threads the bilayer. Over 126–132 (KYRENNK) the chain is Cytoplasmic. A helical membrane pass occupies residues 133–156 (GPMMDFLATAVFAFMWLVSSSAWA). Topologically, residues 157–194 (KGLSDVKMATDPENIIKEMPMCRQTGNTCKELRDPVTS) are vesicular. The helical transmembrane segment at 195–218 (GLNTSVVFGFLNLVLWVGNLWFVF) threads the bilayer. The Cytoplasmic segment spans residues 219-307 (KETGWAAPFM…GAPTSFSNQM (89 aa)). Thr221 carries the phosphothreonine modification. The disordered stretch occupies residues 233-307 (GAPEKQPAPG…GAPTSFSNQM (75 aa)). Residues 248 to 258 (AGYGQGPGGYG) show a composition bias toward gly residues. The repeats, Gly-rich stretch occupies residues 249–298 (GYGQGPGGYGPQDSYGPQGGYQPDYGQPASGGGGYGPQGDYGQQGYGQQG). Residues 259–276 (PQDSYGPQGGYQPDYGQP) are compositionally biased toward low complexity. Residues Tyr273 and Tyr289 each carry the phosphotyrosine modification. Over residues 277–296 (ASGGGGYGPQGDYGQQGYGQ) the composition is skewed to gly residues.

It belongs to the synaptophysin/synaptobrevin family. As to quaternary structure, homohexamer or homotetramer. Interacts with SRCIN1. Interacts with VAMP2; the interaction is inhibited by interaction of VAPM2 with SEPT8. Ubiquitinated; mediated by SIAH1 or SIAH2 and leading to its subsequent proteasomal degradation. In terms of processing, phosphorylated by SRC. In terms of tissue distribution, expressed in the brain with expression in the cerebrum and the cerebellum.

The protein resides in the cytoplasmic vesicle. It is found in the secretory vesicle. It localises to the synaptic vesicle membrane. The protein localises to the synapse. Its subcellular location is the synaptosome. Possibly involved in structural functions as organizing other membrane components or in targeting the vesicles to the plasma membrane. Involved in the regulation of short-term and long-term synaptic plasticity. The protein is Synaptophysin (Syp) of Rattus norvegicus (Rat).